The sequence spans 425 residues: Adenylosuccinate synthetase (425 aa).

GTP contacts are provided by residues 12–18 (GDEGKGK) and 40–42 (GHT). The active-site Proton acceptor is Asp-13. Positions 13 and 40 each coordinate Mg(2+). IMP-binding positions include 13-16 (DEGK), 38-41 (NAGH), Thr-126, Arg-140, Gln-221, Thr-236, and Arg-300. The Proton donor role is filled by His-41. Residue 296 to 302 (ATTGRPR) participates in substrate binding. GTP contacts are provided by residues Arg-302, 328–330 (KLD), and 410–412 (STG).

The protein belongs to the adenylosuccinate synthetase family. In terms of assembly, homodimer. Requires Mg(2+) as cofactor.

It is found in the cytoplasm. It catalyses the reaction IMP + L-aspartate + GTP = N(6)-(1,2-dicarboxyethyl)-AMP + GDP + phosphate + 2 H(+). The protein operates within purine metabolism; AMP biosynthesis via de novo pathway; AMP from IMP: step 1/2. Its function is as follows. Plays an important role in the de novo pathway of purine nucleotide biosynthesis. Catalyzes the first committed step in the biosynthesis of AMP from IMP. This chain is Adenylosuccinate synthetase, found in Thermodesulfovibrio yellowstonii (strain ATCC 51303 / DSM 11347 / YP87).